A 345-amino-acid chain; its full sequence is 3'-5' exoribonuclease 1 (345 aa).

Composition is skewed to basic and acidic residues over residues 1-11 and 19-46; these read MEDERGRERGG and PRPE…ETDG. Residues 1-50 are disordered; the sequence is MEDERGRERGGDAAQQKTPRPECEESRPLSVEKKQRCRLDGKETDGSKFI. Residues serine 55 and serine 58 each carry the phosphoserine modification. In terms of domain architecture, SAP spans 72–106; sequence INRMSKEELRAKLSEFKLETRGVKDVLKKRLKNYY. The region spanning 126–302 is the Exonuclease domain; that stretch reads ICIIDFEATC…DDSKNIARIA (177 aa). Mg(2+) contacts are provided by aspartate 130 and glutamate 132. Glutamate 132 serves as the catalytic Proton acceptor. Positions 132 and 133 each coordinate AMP. Residue aspartate 230 coordinates Mg(2+). Catalysis depends on histidine 289, which acts as the Proton acceptor. Histidine 289 is a binding site for AMP. Aspartate 294 is a binding site for Mg(2+).

Identified in a histone pre-mRNA complex, at least composed of ERI1, LSM11, SLBP, SNRPB, SYNCRIP and YBX1. Binds to 40S and 60S ribosomal subunits and to 80S assembled ribosomes. Interacts in a cooperative manner with SLBP to the mature 3'-end of histone mRNAs. Found in a ternary complex with SLBP and the stem-loop structure of the 3'-end of histone mRNAs. Mg(2+) serves as cofactor. Widely expressed with high levels in spleen, thymus and testis (at protein level).

The protein localises to the cytoplasm. The protein resides in the nucleus. It is found in the nucleolus. The enzyme catalyses Exonucleolytic cleavage in the 3'- to 5'-direction to yield nucleoside 5'-phosphates.. Although it can bind simultaneously with SLBP to the 3'-end of histone mRNA, the presence of SLBP prevents the exonuclease activity. In terms of biological role, RNA exonuclease that binds to the 3'-end of histone mRNAs and degrades them, suggesting that it plays an essential role in histone mRNA decay after replication. A 2' and 3'-hydroxyl groups at the last nucleotide of the histone 3'-end is required for efficient 3'-end histone mRNA exonuclease activity and degradation of RNA substrates. Also able to degrade the 3'-overhangs of short interfering RNAs (siRNAs) in vitro, suggesting a possible role as regulator of RNA interference (RNAi). Required for binding the 5'-ACCCA-3' sequence present in stem-loop structure. Able to bind other mRNAs. Required for 5.8S rRNA 3'-end processing. Also binds to 5.8s ribosomal RNA. Binds with high affinity to the stem-loop structure of replication-dependent histone pre-mRNAs. In vitro, does not have sequence specificity. In vitro, has weak DNA exonuclease activity. In vitro, shows biphasic kinetics such that there is rapid hydrolysis of the last three unpaired RNA nucleotides in the 39 flanking sequence followed by a much slower cleavage through the stem that occurs over a longer incubation period in the order of hours. ERI1-mediated RNA metabolism plays a key role in chondrogenesis. This is 3'-5' exoribonuclease 1 (Eri1) from Mus musculus (Mouse).